Consider the following 452-residue polypeptide: MKRLSITVRLTLLFILLLSVAGAGIVWTLYNGLASELKWRDDTTLINRTAQIKQLLIDGVNPDTLPVYFNRMMDVSQDILIIHGDSINKIVNRTNVSDGMLNNIPASETISAAGIYRSIINDTEIDALRINIDEVSPSLTVTVAKLASARHNMLEQYKINSIIICIVAIVLCSVLSPLLIRTGLREIKKLSGVTEALNYNDSREPVEVSALPRELKPLGQALNKMHHALVKDFERLSQFADDLAHELRTPINALLGQNQVTLSQTRSIAEYQKTIAGNIEELENISRLTENILFLARADKNNVLVKLDSLSLNKEVENLLDYLEYLSDEKEICFKVECNQQIFADKILLQRMLSNLIVNAIRYSPEKSRIHITSFLDTNSYLNIDIASPGTKINEPEKLFRRFWRGDNSRHSVGQGLGLSLVKAIAELHGGSATYHYLNKHNVFRITLPQRN.

Residues 1–9 are Cytoplasmic-facing; the sequence is MKRLSITVR. The helical transmembrane segment at 10-30 threads the bilayer; it reads LTLLFILLLSVAGAGIVWTLY. The Periplasmic segment spans residues 31–158; the sequence is NGLASELKWR…ARHNMLEQYK (128 aa). Residues 159–179 traverse the membrane as a helical segment; that stretch reads INSIIICIVAIVLCSVLSPLL. Over 180 to 452 the chain is Cytoplasmic; sequence IRTGLREIKK…VFRITLPQRN (273 aa). In terms of domain architecture, HAMP spans 181 to 234; that stretch reads RTGLREIKKLSGVTEALNYNDSREPVEVSALPRELKPLGQALNKMHHALVKDFE. Residues 242–452 form the Histidine kinase domain; sequence DLAHELRTPI…VFRITLPQRN (211 aa). Residue His-245 is modified to Phosphohistidine; by autocatalysis.

In terms of processing, autophosphorylated.

The protein localises to the cell inner membrane. The enzyme catalyses ATP + protein L-histidine = ADP + protein N-phospho-L-histidine.. In terms of biological role, member of a two-component regulatory system HprR/HprS involved in response to hydrogen peroxide. Senses H(2)O(2), maybe via the redox state of the membrane. Activates HprR by phosphorylation. Can also phosphorylate CusR. This Escherichia coli (strain K12) protein is Sensor histidine kinase HprS.